The chain runs to 251 residues: 3-deoxy-manno-octulosonate cytidylyltransferase (251 aa).

It belongs to the KdsB family.

It localises to the cytoplasm. It catalyses the reaction 3-deoxy-alpha-D-manno-oct-2-ulosonate + CTP = CMP-3-deoxy-beta-D-manno-octulosonate + diphosphate. The protein operates within nucleotide-sugar biosynthesis; CMP-3-deoxy-D-manno-octulosonate biosynthesis; CMP-3-deoxy-D-manno-octulosonate from 3-deoxy-D-manno-octulosonate and CTP: step 1/1. It functions in the pathway bacterial outer membrane biogenesis; lipopolysaccharide biosynthesis. Functionally, activates KDO (a required 8-carbon sugar) for incorporation into bacterial lipopolysaccharide in Gram-negative bacteria. This chain is 3-deoxy-manno-octulosonate cytidylyltransferase, found in Sodalis glossinidius (strain morsitans).